We begin with the raw amino-acid sequence, 180 residues long: Acireductone dioxygenase (180 aa).

Fe(2+) contacts are provided by His-97, His-99, Glu-103, and His-141. Ni(2+) is bound by residues His-97, His-99, Glu-103, and His-141.

The protein belongs to the acireductone dioxygenase (ARD) family. As to quaternary structure, monomer. It depends on Fe(2+) as a cofactor. Requires Ni(2+) as cofactor.

The enzyme catalyses 1,2-dihydroxy-5-(methylsulfanyl)pent-1-en-3-one + O2 = 3-(methylsulfanyl)propanoate + CO + formate + 2 H(+). It carries out the reaction 1,2-dihydroxy-5-(methylsulfanyl)pent-1-en-3-one + O2 = 4-methylsulfanyl-2-oxobutanoate + formate + 2 H(+). It participates in amino-acid biosynthesis; L-methionine biosynthesis via salvage pathway; L-methionine from S-methyl-5-thio-alpha-D-ribose 1-phosphate: step 5/6. Functionally, catalyzes 2 different reactions between oxygen and the acireductone 1,2-dihydroxy-3-keto-5-methylthiopentene (DHK-MTPene) depending upon the metal bound in the active site. Fe-containing acireductone dioxygenase (Fe-ARD) produces formate and 2-keto-4-methylthiobutyrate (KMTB), the alpha-ketoacid precursor of methionine in the methionine recycle pathway. Ni-containing acireductone dioxygenase (Ni-ARD) produces methylthiopropionate, carbon monoxide and formate, and does not lie on the methionine recycle pathway. This Yersinia pseudotuberculosis serotype O:1b (strain IP 31758) protein is Acireductone dioxygenase.